We begin with the raw amino-acid sequence, 58 residues long: Transactivator protein ORF121 (58 aa).

In terms of biological role, stimulates the expression of 39k gene most probably by increasing IE1 expression. The polypeptide is Transactivator protein ORF121 (AC121) (Lepidoptera (butterflies and moths)).